Here is a 48-residue protein sequence, read N- to C-terminus: Photosystem II reaction center protein K (48 aa).

The propeptide occupies 1–11; it reads MFPSTNQEVLA. Residues 23–43 traverse the membrane as a helical segment; the sequence is IVDVLPIIPLLFLLLAFVWQA.

Belongs to the PsbK family. As to quaternary structure, PSII is composed of 1 copy each of membrane proteins PsbA, PsbB, PsbC, PsbD, PsbE, PsbF, PsbH, PsbI, PsbJ, PsbK, PsbL, PsbM, PsbT, PsbY, PsbZ, Psb30/Ycf12, at least 3 peripheral proteins of the oxygen-evolving complex and a large number of cofactors. It forms dimeric complexes.

It localises to the plastid. The protein resides in the chloroplast thylakoid membrane. One of the components of the core complex of photosystem II (PSII). PSII is a light-driven water:plastoquinone oxidoreductase that uses light energy to abstract electrons from H(2)O, generating O(2) and a proton gradient subsequently used for ATP formation. It consists of a core antenna complex that captures photons, and an electron transfer chain that converts photonic excitation into a charge separation. The chain is Photosystem II reaction center protein K from Euglena sanguinea.